The primary structure comprises 487 residues: Glutamyl-tRNA(Gln) amidotransferase subunit A (487 aa).

Active-site charge relay system residues include Lys-79 and Ser-154. Ser-178 (acyl-ester intermediate) is an active-site residue.

The protein belongs to the amidase family. GatA subfamily. Heterotrimer of A, B and C subunits.

It catalyses the reaction L-glutamyl-tRNA(Gln) + L-glutamine + ATP + H2O = L-glutaminyl-tRNA(Gln) + L-glutamate + ADP + phosphate + H(+). Functionally, allows the formation of correctly charged Gln-tRNA(Gln) through the transamidation of misacylated Glu-tRNA(Gln) in organisms which lack glutaminyl-tRNA synthetase. The reaction takes place in the presence of glutamine and ATP through an activated gamma-phospho-Glu-tRNA(Gln). The polypeptide is Glutamyl-tRNA(Gln) amidotransferase subunit A (Heliobacterium modesticaldum (strain ATCC 51547 / Ice1)).